A 410-amino-acid chain; its full sequence is uncharacterized protein (410 aa).

Polar residues predominate over residues glutamine 178–threonine 187. Disordered stretches follow at residues glutamine 178–glutamine 203 and arginine 236–glutamine 272. Residues glutamine 188 to alanine 198 are compositionally biased toward low complexity. A compositionally biased stretch (basic and acidic residues) spans arginine 236–threonine 263.

This is an uncharacterized protein from Haemophilus influenzae (strain ATCC 51907 / DSM 11121 / KW20 / Rd).